Consider the following 975-residue polypeptide: Importin-11 (975 aa).

Met1 carries the N-acetylmethionine modification. The 73-residue stretch at 28–100 (AEEQLKQWET…RAGLITNFNE (73 aa)) folds into the Importin N-terminal domain. 14 HEAT repeats span residues 123–160 (RQWP…TLAS), 283–317 (QHPI…ERFI), 318–356 (VQCM…KMAF), 422–459 (QTLT…AVGL), 473–509 (WFKT…VKFK), 511–548 (DLRP…DFEF), 555–593 (PYLE…RVNV), 600–636 (GCLV…GLGA), 640–677 (NLYP…TLEN), 683–720 (PELL…SSTE), 731–773 (QSFY…ILPC), 819–849 (QEMD…KLSA), 850–887 (LALL…EDPE), and 957–974 (METV…FLQG). Ser343 is subject to Phosphoserine.

Belongs to the importin beta family. Interacts with UBE2E3 and RPL12.

It is found in the cytoplasm. The protein localises to the nucleus. In terms of biological role, functions in nuclear protein import as nuclear transport receptor. Serves as receptor for nuclear localization signals (NLS) in cargo substrates. Is thought to mediate docking of the importin/substrate complex to the nuclear pore complex (NPC) through binding to nucleoporin and the complex is subsequently translocated through the pore by an energy requiring, Ran-dependent mechanism. At the nucleoplasmic side of the NPC, Ran binds to the importin, the importin/substrate complex dissociates and importin is re-exported from the nucleus to the cytoplasm where GTP hydrolysis releases Ran. The directionality of nuclear import is thought to be conferred by an asymmetric distribution of the GTP- and GDP-bound forms of Ran between the cytoplasm and nucleus. Mediates the nuclear import of RPL12, and of UBE2E3. The protein is Importin-11 (Ipo11) of Mus musculus (Mouse).